A 395-amino-acid polypeptide reads, in one-letter code: Gastric triacylglycerol lipase (395 aa).

Residues 1 to 18 (MWLLLITSVISTFGGAHG) form the signal peptide. N-linked (GlcNAc...) asparagine glycans are attached at residues asparagine 33, asparagine 68, and asparagine 98. An AB hydrolase-1 domain is found at 77-376 (PVVYLQHGLI…LAYNHLDFIW (300 aa)). The Nucleophile role is filled by serine 171. Cysteine 245 and cysteine 254 are oxidised to a cystine. Residue asparagine 270 is glycosylated (N-linked (GlcNAc...) asparagine). Residues aspartate 342 and histidine 371 each act as charge relay system in the active site.

It belongs to the AB hydrolase superfamily. Lipase family. Secreted by the serous (von Ebner's) glands at the back of the rat tongue.

The protein localises to the secreted. It catalyses the reaction a triacylglycerol + H2O = a diacylglycerol + a fatty acid + H(+). The enzyme catalyses 1,2,3-tri-(9Z-octadecenoyl)-glycerol + H2O = 1,2-di-(9Z-octadecenoyl)-sn-glycerol + (9Z)-octadecenoate + H(+). It carries out the reaction 1,2,3-trioctanoylglycerol + H2O = 1,2-dioctanoyl-sn-glycerol + octanoate + H(+). Functionally, catalyzes the hydrolysis of triacylglycerols to yield free fatty acids, diacylglycerol, monoacylglycerol, and glycerol. Shows a preferential hydrolysis at the sn-3 position of triacylglycerol. The protein is Gastric triacylglycerol lipase (Lipf) of Rattus norvegicus (Rat).